The primary structure comprises 691 residues: ERI1 exoribonuclease 2 (691 aa).

The region spanning 37–226 (LIVIDFESTC…DDSRNTALLA (190 aa)) is the Exonuclease domain. Residues aspartate 41, glutamate 43, and aspartate 156 each contribute to the Mg(2+) site. The active-site Proton acceptor is glutamate 43. Glutamate 43 provides a ligand contact to AMP. Histidine 213 functions as the Proton acceptor in the catalytic mechanism. An AMP-binding site is contributed by histidine 213. Position 218 (aspartate 218) interacts with Mg(2+). Zn(2+) contacts are provided by cysteine 597, cysteine 599, cysteine 622, and cysteine 634. The GRF-type zinc finger occupies 597-643 (CKCGRRSKRLVVSNNGPNHGKVFYCCPIGKYQENRKCCGYFKWEQTL).

Belongs to the ERI2 family. Mg(2+) is required as a cofactor.

This is ERI1 exoribonuclease 2 (ERI2) from Homo sapiens (Human).